We begin with the raw amino-acid sequence, 296 residues long: GTPase Era (296 aa).

One can recognise an Era-type G domain in the interval 3-170 (KSGFITIVGR…LELMVKYLPE (168 aa)). The tract at residues 11–18 (GRPNVGKS) is G1. Position 11-18 (11-18 (GRPNVGKS)) interacts with GTP. The G2 stretch occupies residues 37–41 (QTTRN). Residues 58–61 (DTPG) form a G3 region. GTP-binding positions include 58–62 (DTPGI) and 120–123 (NKVD). The interval 120–123 (NKVD) is G4. Residues 149–151 (ISA) form a G5 region. In terms of domain architecture, KH type-2 spans 201-278 (LSQEVPHGIA…NIKIWVKVRK (78 aa)).

The protein belongs to the TRAFAC class TrmE-Era-EngA-EngB-Septin-like GTPase superfamily. Era GTPase family. As to quaternary structure, monomer.

It localises to the cytoplasm. The protein resides in the cell membrane. In terms of biological role, an essential GTPase that binds both GDP and GTP, with rapid nucleotide exchange. Plays a role in 16S rRNA processing and 30S ribosomal subunit biogenesis and possibly also in cell cycle regulation and energy metabolism. The chain is GTPase Era from Clostridium perfringens (strain 13 / Type A).